A 418-amino-acid chain; its full sequence is Serine/threonine transporter SstT (418 aa).

8 helical membrane passes run 21 to 41 (ILIG…AAIA), 49 to 69 (FVGA…IASI), 83 to 103 (ILFL…VVSF), 142 to 162 (ALLN…GIAL), 190 to 210 (FAPL…GFGA), 217 to 237 (LLVV…PLIV), 299 to 319 (MAGA…TLGI), and 331 to 351 (VVAA…LLLI).

This sequence belongs to the dicarboxylate/amino acid:cation symporter (DAACS) (TC 2.A.23) family.

The protein localises to the cell inner membrane. The catalysed reaction is L-serine(in) + Na(+)(in) = L-serine(out) + Na(+)(out). It carries out the reaction L-threonine(in) + Na(+)(in) = L-threonine(out) + Na(+)(out). Involved in the import of serine and threonine into the cell, with the concomitant import of sodium (symport system). This is Serine/threonine transporter SstT from Yersinia pestis bv. Antiqua (strain Antiqua).